The chain runs to 206 residues: Small ribosomal subunit protein uS4 (206 aa).

The S4 RNA-binding domain occupies 96–161; sequence RRLDNVVYRM…QGRIQAALAL (66 aa).

This sequence belongs to the universal ribosomal protein uS4 family. In terms of assembly, part of the 30S ribosomal subunit. Contacts protein S5. The interaction surface between S4 and S5 is involved in control of translational fidelity.

In terms of biological role, one of the primary rRNA binding proteins, it binds directly to 16S rRNA where it nucleates assembly of the body of the 30S subunit. Its function is as follows. With S5 and S12 plays an important role in translational accuracy. The sequence is that of Small ribosomal subunit protein uS4 from Legionella pneumophila (strain Paris).